The sequence spans 151 residues: Methylated-DNA--protein-cysteine methyltransferase (151 aa).

C119 (nucleophile; methyl group acceptor) is an active-site residue.

This sequence belongs to the MGMT family.

It is found in the cytoplasm. It carries out the reaction a 6-O-methyl-2'-deoxyguanosine in DNA + L-cysteinyl-[protein] = S-methyl-L-cysteinyl-[protein] + a 2'-deoxyguanosine in DNA. The catalysed reaction is a 4-O-methyl-thymidine in DNA + L-cysteinyl-[protein] = a thymidine in DNA + S-methyl-L-cysteinyl-[protein]. Functionally, involved in the cellular defense against the biological effects of O6-methylguanine (O6-MeG) and O4-methylthymine (O4-MeT) in DNA. Repairs the methylated nucleobase in DNA by stoichiometrically transferring the methyl group to a cysteine residue in the enzyme. This is a suicide reaction: the enzyme is irreversibly inactivated. The sequence is that of Methylated-DNA--protein-cysteine methyltransferase from Saccharolobus islandicus (strain L.S.2.15 / Lassen #1) (Sulfolobus islandicus).